A 389-amino-acid chain; its full sequence is GTPase Obg (389 aa).

The region spanning 1-159 (MKFVDEAVIR…RSLKLELLLL (159 aa)) is the Obg domain. Residues 160–333 (ADVGLLGMPN…LALKLLDYIA (174 aa)) enclose the OBG-type G domain. Residues 166–173 (GMPNAGKS), 191–195 (FTTLV), 213–216 (DIPG), 283–286 (NKTD), and 314–316 (SAY) contribute to the GTP site. 2 residues coordinate Mg(2+): S173 and T193.

It belongs to the TRAFAC class OBG-HflX-like GTPase superfamily. OBG GTPase family. Monomer. Mg(2+) is required as a cofactor.

It is found in the cytoplasm. Its function is as follows. An essential GTPase which binds GTP, GDP and possibly (p)ppGpp with moderate affinity, with high nucleotide exchange rates and a fairly low GTP hydrolysis rate. Plays a role in control of the cell cycle, stress response, ribosome biogenesis and in those bacteria that undergo differentiation, in morphogenesis control. This Shewanella baltica (strain OS223) protein is GTPase Obg.